We begin with the raw amino-acid sequence, 301 residues long: uncharacterized protein (301 aa).

Thr47 functions as the Charge relay system in the catalytic mechanism. Tyr136 (proton donor) is an active-site residue. The Schiff-base intermediate with substrate role is filled by Lys165.

This sequence belongs to the DapA family. Homotetramer.

It localises to the cytoplasm. This is an uncharacterized protein from Thermofilum pendens (strain DSM 2475 / Hrk 5).